The chain runs to 100 residues: Proline-rich protein 15-like protein (100 aa).

A disordered region spans residues 29–51 (YAQTEGGAEPPGPDAGDPHSDFN).

The protein belongs to the PRR15 family.

The polypeptide is Proline-rich protein 15-like protein (Prr15l) (Mus musculus (Mouse)).